Consider the following 2072-residue polypeptide: Protein still life, isoform SIF type 1 (2072 aa).

G2 carries the N-myristoyl glycine lipid modification. A WH1 domain is found at R29–S147. 7 disordered regions span residues S153–C188, D245–T284, E327–D355, N459–P486, E502–S576, A618–R655, and S699–A747. The segment covering V275–T284 has biased composition (polar residues). Low complexity-rich tracts occupy residues S338–T351, N459–R476, and S522–R553. A compositionally biased stretch (polar residues) spans A564–S576. A compositionally biased stretch (basic and acidic residues) spans I634–R655. Residues S732–G743 show a composition bias toward polar residues. Positions T840–F958 constitute a PH domain. The disordered stretch occupies residues G1088–P1119. Residues S1100–N1114 show a composition bias toward low complexity. An RBD domain is found at K1121–Y1188. Residues Q1204–T1293 form the PDZ domain. The segment at A1403–A1424 is disordered. Positions S1410–A1424 are enriched in low complexity. One can recognise a DH domain in the interval K1436–M1630. 3 disordered regions span residues M1803–T1832, H1844–V2039, and P2051–N2072. Low complexity-rich tracts occupy residues G1811–M1821 and Q1926–H1943. Over residues H1970–E1984 the composition is skewed to basic and acidic residues. Positions L2007–S2022 are enriched in low complexity. A compositionally biased stretch (polar residues) spans Q2023–P2032.

As to expression, expressed in both larval and adult brains, mainly in a subset of neurons but not in glia. In the adult eye is expressed in the two primary pigment cells in the subapical region of the eye. Also present in photoreceptors.

The protein localises to the synapse. Its function is as follows. Regulates synaptic differentiation through the organization of actin cytoskeleton possibly by activating Rho-like GTPases. Is likely a factor in the cascade of Rac1 or Cdc42 in the neurons. May play a role in maintaining proper septate junction functions. Required for eye development and most likely affects corneal lens-formation. In Drosophila melanogaster (Fruit fly), this protein is Protein still life, isoform SIF type 1 (sif).